We begin with the raw amino-acid sequence, 102 residues long: Large ribosomal subunit protein bL28 (102 aa).

Belongs to the bacterial ribosomal protein bL28 family.

The polypeptide is Large ribosomal subunit protein bL28 (Bradyrhizobium diazoefficiens (strain JCM 10833 / BCRC 13528 / IAM 13628 / NBRC 14792 / USDA 110)).